The primary structure comprises 444 residues: Deoxyguanosinetriphosphate triphosphohydrolase-like protein (444 aa).

The HD domain maps to 59–250 (RLTHSLEVSQ…MELADDIAYA (192 aa)).

This sequence belongs to the dGTPase family. Type 2 subfamily.

This Shewanella halifaxensis (strain HAW-EB4) protein is Deoxyguanosinetriphosphate triphosphohydrolase-like protein.